The sequence spans 278 residues: Urease accessory protein UreD (278 aa).

It belongs to the UreD family. UreD, UreF and UreG form a complex that acts as a GTP-hydrolysis-dependent molecular chaperone, activating the urease apoprotein by helping to assemble the nickel containing metallocenter of UreC. The UreE protein probably delivers the nickel.

Its subcellular location is the cytoplasm. Functionally, required for maturation of urease via the functional incorporation of the urease nickel metallocenter. The chain is Urease accessory protein UreD from Escherichia coli.